The primary structure comprises 481 residues: UDP-glucose 6-dehydrogenase 1 (481 aa).

NAD(+) is bound by residues 8–13, D33, R38, 86–90, 127–128, and E161; these read GAGYVG, VNTPT, and ST. Substrate is bound by residues 157–161, 216–223, and 256–269; these read EFLAE, KLAANAFL, and RIGP…VGFG. The Nucleophile role is filled by C272. 272–275 is an NAD(+) binding site; it reads CFQK. Residue 334-335 participates in substrate binding; that stretch reads FK. R342 contributes to the NAD(+) binding site. R448 contributes to the substrate binding site.

The protein belongs to the UDP-glucose/GDP-mannose dehydrogenase family.

The enzyme catalyses UDP-alpha-D-glucose + 2 NAD(+) + H2O = UDP-alpha-D-glucuronate + 2 NADH + 3 H(+). It functions in the pathway nucleotide-sugar biosynthesis; UDP-alpha-D-glucuronate biosynthesis; UDP-alpha-D-glucuronate from UDP-alpha-D-glucose: step 1/1. Its activity is regulated as follows. Inhibited by UDP-xylose. Its function is as follows. Involved in the biosynthesis of UDP-glucuronic acid (UDP-GlcA), providing nucleotide sugars for cell-wall polymers. This chain is UDP-glucose 6-dehydrogenase 1 (UGD1), found in Arabidopsis thaliana (Mouse-ear cress).